A 353-amino-acid chain; its full sequence is NADH-quinone oxidoreductase subunit H (353 aa).

The next 9 membrane-spanning stretches (helical) occupy residues 8 to 28 (LLVY…LFIW), 75 to 95 (GVFW…FAAI), 108 to 128 (IGIL…FMAG), 148 to 168 (VSYE…TGSL), 178 to 198 (SVPF…AAMA), 229 to 249 (LFYL…TTLF), 258 to 278 (LHPV…IIWV), 297 to 317 (FLLP…LAAP), and 319 to 339 (MNTA…ILLF).

This sequence belongs to the complex I subunit 1 family. As to quaternary structure, NDH-1 is composed of 14 different subunits. Subunits NuoA, H, J, K, L, M, N constitute the membrane sector of the complex.

It localises to the cell membrane. It carries out the reaction a quinone + NADH + 5 H(+)(in) = a quinol + NAD(+) + 4 H(+)(out). In terms of biological role, NDH-1 shuttles electrons from NADH, via FMN and iron-sulfur (Fe-S) centers, to quinones in the respiratory chain. The immediate electron acceptor for the enzyme in this species is believed to be ubiquinone. Couples the redox reaction to proton translocation (for every two electrons transferred, four hydrogen ions are translocated across the cytoplasmic membrane), and thus conserves the redox energy in a proton gradient. This subunit may bind ubiquinone. The sequence is that of NADH-quinone oxidoreductase subunit H from Dehalococcoides mccartyi (strain ATCC BAA-2266 / KCTC 15142 / 195) (Dehalococcoides ethenogenes (strain 195)).